A 350-amino-acid polypeptide reads, in one-letter code: Melatonin receptor type 1A (350 aa).

Topologically, residues 1–29 (MQGNGSALPNASQPVLRGDGARPSWLASA) are extracellular. N-linked (GlcNAc...) asparagine glycans are attached at residues asparagine 4 and asparagine 10. Residues 30–50 (LACVLIFTIVVDILGNLLVIL) form a helical membrane-spanning segment. Topologically, residues 51–63 (SVYRNKKLRNAGN) are cytoplasmic. Residues 64–84 (IFVVSLAVADLVVAIYPYPLV) traverse the membrane as a helical segment. The Extracellular portion of the chain corresponds to 85-102 (LMSIFNNGWNLGYLHCQV). Residues cysteine 100 and cysteine 177 are joined by a disulfide bond. The chain crosses the membrane as a helical span at residues 103–123 (SGFLMGLSVIGSIFNITGIAI). Over 124–142 (NRYCYICHSLKYDKLYSSK) the chain is Cytoplasmic. A helical membrane pass occupies residues 143 to 163 (NSLCYVLLIWLLTLAAVLPNL). Melatonin-binding residues include asparagine 162 and glutamine 181. Over 164-187 (RAGTLQYDPRIYSCTFAQSVSSAY) the chain is Extracellular. Residues 188–208 (TIAVVVFHFLVPMIIVIFCYL) traverse the membrane as a helical segment. Topologically, residues 209–240 (RIWILVLQVRQRVKPDRKPKLKPQDFRNFVTM) are cytoplasmic. The chain crosses the membrane as a helical span at residues 241-261 (FVVFVLFAICWAPLNFIGLAV). The Extracellular portion of the chain corresponds to 262–274 (ASDPASMVPRIPE). A helical transmembrane segment spans residues 275 to 295 (WLFVASYYMAYFNSCLNAIIY). The Cytoplasmic portion of the chain corresponds to 296 to 350 (GLLNQNFRKEYRRIIVSLCTARVFFVDSSNDVADRVKWKPSPLMTNNNVVKVDSV).

This sequence belongs to the G-protein coupled receptor 1 family. In terms of tissue distribution, expressed in hypophyseal pars tuberalis and hypothalamic suprachiasmatic nuclei (SCN). Hippocampus.

Its subcellular location is the cell membrane. High affinity receptor for melatonin. Likely to mediate the reproductive and circadian actions of melatonin. The activity of this receptor is mediated by pertussis toxin sensitive G proteins that inhibit adenylate cyclase activity. Possibly involved in sleep induction, by melatonin activation of the potassium channel KCNMA1/BK and the dissociation of G-beta and G-gamma subunits, thereby decreasing synaptic transmission. This Homo sapiens (Human) protein is Melatonin receptor type 1A (MTNR1A).